The primary structure comprises 166 residues: RING-H2 finger protein ATL79 (166 aa).

The N-terminal stretch at 1 to 16 is a signal peptide; that stretch reads MRLLVAEAASPLSSAA. A helical membrane pass occupies residues 41–61; the sequence is SVLLILVISALICALSLYAAI. The segment at 71 to 90 is disordered; sequence TEDDHKPDPEAAASSTPTTP. Over residues 81–90 the composition is skewed to low complexity; that stretch reads AAASSTPTTP. The RING-type; atypical zinc finger occupies 107-149; it reads CAICLSEFEQGESIQVLEKCQHGFHVKCIHKWLSTRSSCPTCR.

The protein belongs to the RING-type zinc finger family. ATL subfamily.

Its subcellular location is the membrane. It carries out the reaction S-ubiquitinyl-[E2 ubiquitin-conjugating enzyme]-L-cysteine + [acceptor protein]-L-lysine = [E2 ubiquitin-conjugating enzyme]-L-cysteine + N(6)-ubiquitinyl-[acceptor protein]-L-lysine.. It participates in protein modification; protein ubiquitination. This Arabidopsis thaliana (Mouse-ear cress) protein is RING-H2 finger protein ATL79 (ATL79).